We begin with the raw amino-acid sequence, 64 residues long: Neuropeptide-like 4 (64 aa).

A signal peptide spans 1-18; that stretch reads MFKLLVVVFAALFAAALA. Propeptides lie at residues 19–40 and 63–64; these read VPAP…EPAP and YG.

The protein localises to the secreted. This Drosophila melanogaster (Fruit fly) protein is Neuropeptide-like 4 (Nplp4).